The sequence spans 92 residues: Small ribosomal subunit protein uS19 (92 aa).

Belongs to the universal ribosomal protein uS19 family.

Its function is as follows. Protein S19 forms a complex with S13 that binds strongly to the 16S ribosomal RNA. The polypeptide is Small ribosomal subunit protein uS19 (Desulfosudis oleivorans (strain DSM 6200 / JCM 39069 / Hxd3) (Desulfococcus oleovorans)).